The chain runs to 845 residues: Protein P (845 aa).

The segment at 1–179 (MPLSYQHFRK…FCGSPYSWEQ (179 aa)) is terminal protein domain (TP). Positions 180 to 348 (ELHHGRSVTK…YCLSHLVNLL (169 aa)) are spacer. Disordered regions lie at residues 186–205 (SVTK…QPSG), 222–245 (QPRL…SGSI), and 288–318 (YSHL…RSQS). Positions 289–301 (SHLSTSKRQSSSG) are enriched in polar residues. The tract at residues 349–692 (EDWGPCADHG…YMNLYPVARQ (344 aa)) is polymerase/reverse transcriptase domain (RT). The Reverse transcriptase domain occupies 359-602 (EHHIRIPRTP…YSLNFMGYII (244 aa)). The Mg(2+) site is built by Asp431, Asp553, and Asp554.

This sequence belongs to the hepadnaviridae P protein family.

The catalysed reaction is DNA(n) + a 2'-deoxyribonucleoside 5'-triphosphate = DNA(n+1) + diphosphate. It carries out the reaction Endonucleolytic cleavage to 5'-phosphomonoester.. Its activity is regulated as follows. Activated by host HSP70 and HSP40 in vitro to be able to bind the epsilon loop of the pgRNA. Because deletion of the RNase H region renders the protein partly chaperone-independent, the chaperones may be needed indirectly to relieve occlusion of the RNA-binding site by this domain. Inhibited by several reverse-transcriptase inhibitors: Lamivudine, Adefovir and Entecavir. In terms of biological role, multifunctional enzyme that converts the viral RNA genome into dsDNA in viral cytoplasmic capsids. This enzyme displays a DNA polymerase activity that can copy either DNA or RNA templates, and a ribonuclease H (RNase H) activity that cleaves the RNA strand of RNA-DNA heteroduplexes in a partially processive 3'- to 5'-endonucleasic mode. Neo-synthesized pregenomic RNA (pgRNA) are encapsidated together with the P protein, and reverse-transcribed inside the nucleocapsid. Initiation of reverse-transcription occurs first by binding the epsilon loop on the pgRNA genome, and is initiated by protein priming, thereby the 5'-end of (-)DNA is covalently linked to P protein. Partial (+)DNA is synthesized from the (-)DNA template and generates the relaxed circular DNA (RC-DNA) genome. After budding and infection, the RC-DNA migrates in the nucleus, and is converted into a plasmid-like covalently closed circular DNA (cccDNA). The activity of P protein does not seem to be necessary for cccDNA generation, and is presumably released from (+)DNA by host nuclear DNA repair machinery. This is Protein P from Hepatitis B virus genotype A3 (isolate Cameroon/CMR711/1994) (HBV-A).